The following is a 316-amino-acid chain: Secondary metabolism regulator laeA (316 aa).

This sequence belongs to the methyltransferase superfamily. LaeA methyltransferase family. In terms of assembly, component of the heterotrimeric velvet complex composed of laeA, ve1 and velB; Ve1 acting as a bridging protein between laeA and velB. Interacts directly with veA.

It localises to the nucleus. The protein localises to the cytoplasm. The catalysed reaction is L-methionyl-[protein] + S-adenosyl-L-methionine = S-methyl-L-methionyl-[protein] + S-adenosyl-L-homocysteine. Functionally, methyltransferase that performs automethylation. No other methyl-accepting substrate has been identified yet. Component of the velvet transcription factor complex that acts as a global regulator for secondary metabolite gene expression. Controls the expression of the mycotoxins trichothecenes and zearalenon gene clusters. Negatively controls perithecial induction, but positively controls virulence toward the host plant. In Gibberella zeae (strain ATCC MYA-4620 / CBS 123657 / FGSC 9075 / NRRL 31084 / PH-1) (Wheat head blight fungus), this protein is Secondary metabolism regulator laeA.